The primary structure comprises 186 residues: Peptidyl-tRNA hydrolase (186 aa).

Tyr14 is a tRNA binding site. Residue His19 is the Proton acceptor of the active site. Tyr64, Asn66, and Asn112 together coordinate tRNA.

The protein belongs to the PTH family. As to quaternary structure, monomer.

Its subcellular location is the cytoplasm. It carries out the reaction an N-acyl-L-alpha-aminoacyl-tRNA + H2O = an N-acyl-L-amino acid + a tRNA + H(+). Hydrolyzes ribosome-free peptidyl-tRNAs (with 1 or more amino acids incorporated), which drop off the ribosome during protein synthesis, or as a result of ribosome stalling. In terms of biological role, catalyzes the release of premature peptidyl moieties from peptidyl-tRNA molecules trapped in stalled 50S ribosomal subunits, and thus maintains levels of free tRNAs and 50S ribosomes. This chain is Peptidyl-tRNA hydrolase, found in Geobacillus kaustophilus (strain HTA426).